The following is a 145-amino-acid chain: Aminoglycoside N(6')-acetyltransferase type 1 (145 aa).

An N-acetyltransferase domain is found at 1 to 145 (MDIRQMNKTH…ERVIFYRKRC (145 aa)). Residues W22, H25, Y66, and E79 each coordinate substrate. Acetyl-CoA contacts are provided by residues 81–83 (IFV) and 89–94 (QRGVAK). Position 115 (D115) interacts with substrate. N120 is a binding site for acetyl-CoA. A substrate-binding site is contributed by E136.

As to quaternary structure, homodimer.

It carries out the reaction kanamycin B + acetyl-CoA = N(6')-acetylkanamycin B + CoA + H(+). Functionally, catalyzes the transfer of an acetyl group from acetyl-CoA to the 6'-amino group of aminoglycoside molecules conferring resistance to antibiotics containing the purpurosamine ring including amikacin, tobramycin, dibekacin and ribostamycin. Able to acetylate eukaryotic histone proteins. The sequence is that of Aminoglycoside N(6')-acetyltransferase type 1 from Salmonella enteritidis.